The chain runs to 313 residues: Inner membrane ABC transporter permease protein YdcU (313 aa).

Residues 1–25 (MAMNVLQSPSRPGLGKVSGFFWHNP) lie on the Cytoplasmic side of the membrane. Residues 26-46 (GLGLFLLLLGPLMWFGIVYFG) traverse the membrane as a helical segment. The Periplasmic segment spans residues 47–92 (SLLTLLWQGFYTFDDFTMSVTPELTLANIRALFNPANYDIILRTLT). The ABC transmembrane type-1 domain occupies 87–302 (ILRTLTMAVA…PIILIALYLA (216 aa)). Residues 93 to 113 (MAVAVTIASAILAFPMAWYMA) form a helical membrane-spanning segment. The Cytoplasmic portion of the chain corresponds to 114-122 (RYTSGKMKA). A helical membrane pass occupies residues 123-143 (FFYIAVMLPMWASYIVKAYAW). The Periplasmic portion of the chain corresponds to 144–154 (TLLLAKDGVAQ). A helical transmembrane segment spans residues 155–175 (WFLQHLGLEPLLTAFLTLPAV). The Cytoplasmic portion of the chain corresponds to 176–187 (GGNTLSTSGLGR). Residues 188–208 (FLVFLYIWLPFMILPVQAALE) traverse the membrane as a helical segment. At 209–230 (RLPPSLLQASADLGARPRQTFR) the chain is on the periplasmic side. The chain crosses the membrane as a helical span at residues 231-251 (YVVLPLAIPGIAAGSIFTFSL). Residue T252 is a topological domain, cytoplasmic. The helical transmembrane segment at 253–273 (LGDFIVPQLVGPPGYFIGNMV) threads the bilayer. The Periplasmic segment spans residues 274–283 (YSQQGAIGNM). A helical membrane pass occupies residues 284-304 (PMAAAFTLVPIILIALYLAFV). At 305–313 (KRLGAFDAL) the chain is on the cytoplasmic side.

The protein belongs to the binding-protein-dependent transport system permease family. CysTW subfamily.

It localises to the cell inner membrane. Its function is as follows. Probably part of the ABC transporter complex YdcSTUV. Probably responsible for the translocation of the substrate across the membrane. This chain is Inner membrane ABC transporter permease protein YdcU (ydcU), found in Escherichia coli (strain K12).